We begin with the raw amino-acid sequence, 140 residues long: Small ribosomal subunit protein uS11 (140 aa).

Residues 116 to 140 (GRVEDVTPIPHDGTRPKGGRRGRRV) form a disordered region.

This sequence belongs to the universal ribosomal protein uS11 family. In terms of assembly, part of the 30S ribosomal subunit.

Its function is as follows. Located on the platform of the 30S subunit. The polypeptide is Small ribosomal subunit protein uS11 (Thermococcus kodakarensis (strain ATCC BAA-918 / JCM 12380 / KOD1) (Pyrococcus kodakaraensis (strain KOD1))).